The primary structure comprises 298 residues: Ectoine dioxygenase (298 aa).

The span at 1 to 18 (MLQQAIDRDPVDRIDRYP) shows a compositional bias: basic and acidic residues. Positions 1-26 (MLQQAIDRDPVDRIDRYPTRTAEPAP) are disordered. An L-ectoine-binding site is contributed by Gln-133. 3 residues coordinate Fe cation: His-150, Asp-152, and His-251.

Belongs to the PhyH family. EctD subfamily. Homodimer. Fe(2+) is required as a cofactor.

It catalyses the reaction L-ectoine + 2-oxoglutarate + O2 = 5-hydroxyectoine + succinate + CO2. Involved in the biosynthesis of 5-hydroxyectoine, called compatible solute, which helps organisms to survive extreme osmotic stress by acting as a highly soluble organic osmolyte. Catalyzes the 2-oxoglutarate-dependent selective hydroxylation of L-ectoine to yield (4S,5S)-5-hydroxyectoine. This chain is Ectoine dioxygenase, found in Nocardia farcinica (strain IFM 10152).